A 404-amino-acid polypeptide reads, in one-letter code: Multidrug resistance protein MdtG (404 aa).

11 consecutive transmembrane segments (helical) span residues 19-39 (LGCF…PLYV), 56-76 (LVFS…GGLA), 90-110 (LGMA…QFLI), 113-133 (ALLG…ATQV), 144-164 (TLST…GLLA), 171-191 (PVFF…FFFI), 222-242 (LFVT…ILTL), 254-274 (IAFI…LSAP), 288-308 (ILIV…FVQT), 317-337 (FLLG…LVYN), and 376-396 (AVFC…WNSL).

It belongs to the major facilitator superfamily. DHA1 family. MdtG (TC 2.A.1.2.20) subfamily.

The protein localises to the cell inner membrane. This is Multidrug resistance protein MdtG from Salmonella typhi.